We begin with the raw amino-acid sequence, 142 residues long: Large ribosomal subunit protein uL23 (142 aa).

It belongs to the universal ribosomal protein uL23 family.

This is Large ribosomal subunit protein uL23 (RPL25) from Kluyveromyces lactis (strain ATCC 8585 / CBS 2359 / DSM 70799 / NBRC 1267 / NRRL Y-1140 / WM37) (Yeast).